Consider the following 149-residue polypeptide: Arginine repressor (149 aa).

This sequence belongs to the ArgR family.

The protein resides in the cytoplasm. The protein operates within amino-acid biosynthesis; L-arginine biosynthesis [regulation]. In terms of biological role, regulates arginine biosynthesis genes. The protein is Arginine repressor of Alkaliphilus metalliredigens (strain QYMF).